Here is a 768-residue protein sequence, read N- to C-terminus: Lon protease (768 aa).

Residues 4-198 (APFLPIRDLV…RILDEIVAEM (195 aa)) enclose the Lon N-terminal domain. 349–356 (GPPGIGKT) is a binding site for ATP. Residues 586–768 (TGKIGVVNGL…DDVSKLVFVK (183 aa)) form the Lon proteolytic domain. Residues S674 and K717 contribute to the active site.

Belongs to the peptidase S16 family. In terms of assembly, homohexamer. Organized in a ring with a central cavity.

The protein resides in the cytoplasm. It carries out the reaction Hydrolysis of proteins in presence of ATP.. Functionally, ATP-dependent serine protease that mediates the selective degradation of mutant and abnormal proteins as well as certain short-lived regulatory proteins. Required for cellular homeostasis and for survival from DNA damage and developmental changes induced by stress. Degrades polypeptides processively to yield small peptide fragments that are 5 to 10 amino acids long. Binds to DNA in a double-stranded, site-specific manner. The protein is Lon protease of Fusobacterium nucleatum subsp. nucleatum (strain ATCC 25586 / DSM 15643 / BCRC 10681 / CIP 101130 / JCM 8532 / KCTC 2640 / LMG 13131 / VPI 4355).